Consider the following 444-residue polypeptide: UDP-N-acetylglucosamine 1-carboxyvinyltransferase (444 aa).

A phosphoenolpyruvate-binding site is contributed by 22-23; it reads KN. Arg94 lines the UDP-N-acetyl-alpha-D-glucosamine pocket. The active-site Proton donor is Asp119. Residues Asp309 and Val331 each coordinate UDP-N-acetyl-alpha-D-glucosamine.

Belongs to the EPSP synthase family. MurA subfamily.

Its subcellular location is the cytoplasm. The enzyme catalyses phosphoenolpyruvate + UDP-N-acetyl-alpha-D-glucosamine = UDP-N-acetyl-3-O-(1-carboxyvinyl)-alpha-D-glucosamine + phosphate. Its pathway is cell wall biogenesis; peptidoglycan biosynthesis. Its function is as follows. Cell wall formation. Adds enolpyruvyl to UDP-N-acetylglucosamine. The polypeptide is UDP-N-acetylglucosamine 1-carboxyvinyltransferase (Chlamydia trachomatis serovar D (strain ATCC VR-885 / DSM 19411 / UW-3/Cx)).